Consider the following 283-residue polypeptide: NADPH-dependent 7-cyano-7-deazaguanine reductase (283 aa).

90-92 (IES) is a binding site for substrate. 92 to 93 (SK) contributes to the NADPH binding site. The active-site Thioimide intermediate is cysteine 191. The active-site Proton donor is aspartate 198. Residue 230–231 (HE) participates in substrate binding. NADPH is bound at residue 259 to 260 (RG).

It belongs to the GTP cyclohydrolase I family. QueF type 2 subfamily. In terms of assembly, homodimer.

The protein resides in the cytoplasm. The enzyme catalyses 7-aminomethyl-7-carbaguanine + 2 NADP(+) = 7-cyano-7-deazaguanine + 2 NADPH + 3 H(+). The protein operates within tRNA modification; tRNA-queuosine biosynthesis. In terms of biological role, catalyzes the NADPH-dependent reduction of 7-cyano-7-deazaguanine (preQ0) to 7-aminomethyl-7-deazaguanine (preQ1). The protein is NADPH-dependent 7-cyano-7-deazaguanine reductase of Tolumonas auensis (strain DSM 9187 / NBRC 110442 / TA 4).